A 191-amino-acid chain; its full sequence is Orotate phosphoribosyltransferase (191 aa).

5-phospho-alpha-D-ribose 1-diphosphate is bound at residue 116–124 (EDVVTTGGS). Residues T120 and R148 each coordinate orotate.

Belongs to the purine/pyrimidine phosphoribosyltransferase family. PyrE subfamily. Homodimer. Requires Mg(2+) as cofactor.

The enzyme catalyses orotidine 5'-phosphate + diphosphate = orotate + 5-phospho-alpha-D-ribose 1-diphosphate. It functions in the pathway pyrimidine metabolism; UMP biosynthesis via de novo pathway; UMP from orotate: step 1/2. Catalyzes the transfer of a ribosyl phosphate group from 5-phosphoribose 1-diphosphate to orotate, leading to the formation of orotidine monophosphate (OMP). The polypeptide is Orotate phosphoribosyltransferase (Carboxydothermus hydrogenoformans (strain ATCC BAA-161 / DSM 6008 / Z-2901)).